A 1710-amino-acid chain; its full sequence is Protein NETWORKED 1B (1710 aa).

The region spanning 13 to 92 (YSWWWDSHIP…ERYDHTTVEL (80 aa)) is the NAB domain. A disordered region spans residues 113 to 159 (EDSASSSSEPRTEADTEALQKDGTKSKRSFSQMNKLDGTSDSHEADS). Composition is skewed to basic and acidic residues over residues 122-137 (PRTE…DGTK) and 150-159 (GTSDSHEADS). Coiled coils occupy residues 152-446 (SDSH…ELGA), 474-546 (QMLR…EIHC), 579-883 (VKKL…IDSL), 974-1021 (HQCG…FESL), 1095-1259 (VSSL…LQEK), and 1285-1336 (LILE…LSAY). Positions 1409-1448 (RLSRQITRSTSQKRRDRRKIENIQPDDQVTGESRQPRLRP) are disordered. Positions 1559–1665 (RRLSSLRISL…VLKLEDGTKS (107 aa)) form a coiled coil.

Belongs to the NET family. As to expression, expressed in root meristems and at very low levels throughout mature vasculature.

In terms of biological role, plant-specific actin binding protein. May be part of a membrane-cytoskeletal adapter complex. This chain is Protein NETWORKED 1B, found in Arabidopsis thaliana (Mouse-ear cress).